A 441-amino-acid polypeptide reads, in one-letter code: MFS-type transporter (441 aa).

The tract at residues 1–47 (MPPQQEQDTDSDAIRSYNEESKSETPGCIPDAMLSSDETSNDVASDI) is disordered. Transmembrane regions (helical) follow at residues 61–81 (TLCG…FGIF), 95–115 (DISW…AFVG), 125–145 (LVLS…SLST), 150–170 (LILS…TPAV), 183–203 (LAIG…NSMA), 212–232 (FGWT…FVVV), 259–279 (FFTI…YYIA), 289–309 (TLTY…GVFG), 323–343 (LELL…WIAV), and 351–371 (VWTV…PAGI). Asn388 carries an N-linked (GlcNAc...) asparagine glycan. The next 2 helical transmembrane spans lie at 389–409 (FTVI…IITA) and 415–435 (YGAQ…IVAA).

It belongs to the major facilitator superfamily. Monocarboxylate porter (TC 2.A.1.13) family.

The protein localises to the membrane. Its function is as follows. MFS-type transporter; part of the gene cluster that mediates the biosynthesis of butenolide, a mycotoxin that shows antibiotic activity but does not seem to play a major role in the spread of head blight in wheat. The chain is MFS-type transporter from Gibberella zeae (strain ATCC MYA-4620 / CBS 123657 / FGSC 9075 / NRRL 31084 / PH-1) (Wheat head blight fungus).